The following is a 342-amino-acid chain: MAELKPLIAKVANGESLNREDARTAFDILMSGEATPSQIGGFLMALRVRGETVDEIVGAVSSMRARMLPVSAPANAIDIVGTGGDGIGTYNISTLASIITAGTGLPVAKHGNRALSSKSGTADALSALGVRLDIGPDLIARCIAEAGLGFMFAQMHHSAMRHVGPSRVELGTRTIFNLLGPLSNPAGAKRQLLGVFSPRWLVPLAEVLRDLGSESIWVVHGDGMDEVTTTGVTHVAALEDGKIRTFDLTPKDFGVEPALMNDLKGGDGIANAAALREVLSGKRNAYRDISLCNAAAALVIAGKAETLSQAMTIASDALDSGKAAAALDRLVAVSNEANSGQE.

Residues Gly81, 84-85 (GD), Thr89, 91-94 (NIST), 109-117 (KHGNRALSS), and Thr121 each bind 5-phospho-alpha-D-ribose 1-diphosphate. Gly81 lines the anthranilate pocket. Position 93 (Ser93) interacts with Mg(2+). Asn112 is a binding site for anthranilate. Arg167 serves as a coordination point for anthranilate. Mg(2+)-binding residues include Asp225 and Glu226.

It belongs to the anthranilate phosphoribosyltransferase family. In terms of assembly, homodimer. Mg(2+) serves as cofactor.

The enzyme catalyses N-(5-phospho-beta-D-ribosyl)anthranilate + diphosphate = 5-phospho-alpha-D-ribose 1-diphosphate + anthranilate. It participates in amino-acid biosynthesis; L-tryptophan biosynthesis; L-tryptophan from chorismate: step 2/5. Catalyzes the transfer of the phosphoribosyl group of 5-phosphorylribose-1-pyrophosphate (PRPP) to anthranilate to yield N-(5'-phosphoribosyl)-anthranilate (PRA). This chain is Anthranilate phosphoribosyltransferase, found in Agrobacterium fabrum (strain C58 / ATCC 33970) (Agrobacterium tumefaciens (strain C58)).